The primary structure comprises 857 residues: Bifunctional levopimaradiene synthase, chloroplastic (857 aa).

Residues 1-33 (MALPSSSLSSQIHTGATTQCIPHFHGSLNAGTS) constitute a chloroplast transit peptide. Lys-257 is a binding site for substrate. Residues Asp-390 and Asp-392 each coordinate Mg(2+). The DXDD motif motif lies at 390 to 393 (DIDD). Lys-477 lines the substrate pocket. Residues Asp-609, Asp-613, Asn-753, Thr-757, and Glu-761 each coordinate Mg(2+). The DDXXD motif signature appears at 609–613 (DDLYD).

This sequence belongs to the terpene synthase family. Tpsd subfamily. It depends on Mg(2+) as a cofactor.

It is found in the plastid. The protein localises to the chloroplast. The enzyme catalyses (2E,6E,10E)-geranylgeranyl diphosphate = (+)-copalyl diphosphate. It carries out the reaction (+)-copalyl diphosphate = abieta-7,13-diene + diphosphate. The catalysed reaction is (+)-copalyl diphosphate = abieta-8(14),12-diene + diphosphate. It catalyses the reaction (+)-copalyl diphosphate = neoabietadiene + diphosphate. It functions in the pathway terpene metabolism; oleoresin biosynthesis. In terms of biological role, involved in defensive oleoresin formation in conifers in response to insect attack or other injury. Involved in diterpene (C20) olefins biosynthesis. Bifunctional enzyme that catalyzes two sequential cyclizations of geranylgeranyl diphosphate (GGPP) to levopimaradiene. Levopimaradiene is the major products of the enzyme with abietadiene and neoabietadiene. No activity with farnesyl diphosphate (FPP) as substrate. The sequence is that of Bifunctional levopimaradiene synthase, chloroplastic from Pinus banksiana (Jack pine).